We begin with the raw amino-acid sequence, 111 residues long: MKLHKKKLNITMTKQFIQKFPSNTVGSGGKTLLSKFQENSGLTETQIYILTQRVARLSSHLKNHNKDYSSQRGLRKLLGKRKRLLAYLSNEDVERYENLLIQLGIRGLKKI.

This sequence belongs to the universal ribosomal protein uS15 family. In terms of assembly, part of the 30S ribosomal subunit.

The protein localises to the plastid. It localises to the chloroplast. The sequence is that of Small ribosomal subunit protein uS15c (rps15) from Staurastrum punctulatum (Green alga).